The chain runs to 243 residues: UPF0246 protein SpyM51747 (243 aa).

It belongs to the UPF0246 family.

This chain is UPF0246 protein SpyM51747, found in Streptococcus pyogenes serotype M5 (strain Manfredo).